The following is a 242-amino-acid chain: Ditrans,polycis-undecaprenyl-diphosphate synthase ((2E,6E)-farnesyl-diphosphate specific) (242 aa).

D21 is a catalytic residue. D21 is a Mg(2+) binding site. Substrate contacts are provided by residues G22 to R25, W26, R34, H38, and S66 to E68. The Proton acceptor role is filled by N69. Residues W70, R72, R189, and R195 to S197 each bind substrate. Mg(2+) is bound at residue E208.

It belongs to the UPP synthase family. As to quaternary structure, homodimer. Mg(2+) serves as cofactor.

It catalyses the reaction 8 isopentenyl diphosphate + (2E,6E)-farnesyl diphosphate = di-trans,octa-cis-undecaprenyl diphosphate + 8 diphosphate. Functionally, catalyzes the sequential condensation of isopentenyl diphosphate (IPP) with (2E,6E)-farnesyl diphosphate (E,E-FPP) to yield (2Z,6Z,10Z,14Z,18Z,22Z,26Z,30Z,34E,38E)-undecaprenyl diphosphate (di-trans,octa-cis-UPP). UPP is the precursor of glycosyl carrier lipid in the biosynthesis of bacterial cell wall polysaccharide components such as peptidoglycan and lipopolysaccharide. The polypeptide is Ditrans,polycis-undecaprenyl-diphosphate synthase ((2E,6E)-farnesyl-diphosphate specific) (Haemophilus ducreyi (strain 35000HP / ATCC 700724)).